The following is a 235-amino-acid chain: uncharacterized protein (235 aa).

This is an uncharacterized protein from Invertebrate iridescent virus 6 (IIV-6).